The primary structure comprises 75 residues: Peptide Ctri10036 (75 aa).

The N-terminal stretch at 1 to 22 (MNSKYLFVFLILNVIFIDLCQG) is a signal peptide. Lysine amide is present on K41. Residues 47-75 (ELGSQYDYLQDFRKRELDLDDLLSKFPDY) constitute a propeptide that is removed on maturation.

Belongs to the non-disulfide-bridged peptide (NDBP) superfamily. Short antimicrobial peptide (group 4) family. As to expression, expressed by the venom gland.

The protein localises to the secreted. This is Peptide Ctri10036 from Chaerilus tricostatus (Scorpion).